Here is a 148-residue protein sequence, read N- to C-terminus: ATP synthase epsilon chain (148 aa).

Belongs to the ATPase epsilon chain family. As to quaternary structure, F-type ATPases have 2 components, CF(1) - the catalytic core - and CF(0) - the membrane proton channel. CF(1) has five subunits: alpha(3), beta(3), gamma(1), delta(1), epsilon(1). CF(0) has three main subunits: a, b and c.

It localises to the cell inner membrane. Its function is as follows. Produces ATP from ADP in the presence of a proton gradient across the membrane. In Paracoccus denitrificans (strain Pd 1222), this protein is ATP synthase epsilon chain.